We begin with the raw amino-acid sequence, 340 residues long: Ketol-acid reductoisomerase (NADP(+)) (340 aa).

The region spanning 3 to 182 (VTMYYEDDVE…GCARVGIIET (180 aa)) is the KARI N-terminal Rossmann domain. Residues 26–29 (YGSQ), arginine 49, serine 53, and 83–86 (DELQ) each bind NADP(+). The active site involves histidine 108. Glycine 134 lines the NADP(+) pocket. A KARI C-terminal knotted domain is found at 183–328 (TFKEETEEDL…AELRKAMPFT (146 aa)). Residues aspartate 191, glutamate 195, glutamate 227, and glutamate 231 each contribute to the Mg(2+) site. Position 252 (serine 252) interacts with substrate.

This sequence belongs to the ketol-acid reductoisomerase family. Mg(2+) is required as a cofactor.

The catalysed reaction is (2R)-2,3-dihydroxy-3-methylbutanoate + NADP(+) = (2S)-2-acetolactate + NADPH + H(+). The enzyme catalyses (2R,3R)-2,3-dihydroxy-3-methylpentanoate + NADP(+) = (S)-2-ethyl-2-hydroxy-3-oxobutanoate + NADPH + H(+). It functions in the pathway amino-acid biosynthesis; L-isoleucine biosynthesis; L-isoleucine from 2-oxobutanoate: step 2/4. The protein operates within amino-acid biosynthesis; L-valine biosynthesis; L-valine from pyruvate: step 2/4. Its function is as follows. Involved in the biosynthesis of branched-chain amino acids (BCAA). Catalyzes an alkyl-migration followed by a ketol-acid reduction of (S)-2-acetolactate (S2AL) to yield (R)-2,3-dihydroxy-isovalerate. In the isomerase reaction, S2AL is rearranged via a Mg-dependent methyl migration to produce 3-hydroxy-3-methyl-2-ketobutyrate (HMKB). In the reductase reaction, this 2-ketoacid undergoes a metal-dependent reduction by NADPH to yield (R)-2,3-dihydroxy-isovalerate. The polypeptide is Ketol-acid reductoisomerase (NADP(+)) (Lactococcus lactis subsp. lactis (strain IL1403) (Streptococcus lactis)).